Consider the following 160-residue polypeptide: 2-C-methyl-D-erythritol 2,4-cyclodiphosphate synthase (160 aa).

Asp11 and His13 together coordinate a divalent metal cation. 4-CDP-2-C-methyl-D-erythritol 2-phosphate contacts are provided by residues 11 to 13 and 37 to 38; these read DVH and HS. His45 is an a divalent metal cation binding site. 4-CDP-2-C-methyl-D-erythritol 2-phosphate contacts are provided by residues 59–61, 64–68, 103–109, 135–138, Phe142, and Arg145; these read DIG, FPDTD, AQAPKMA, and TTTE.

It belongs to the IspF family. As to quaternary structure, homotrimer. It depends on a divalent metal cation as a cofactor.

It catalyses the reaction 4-CDP-2-C-methyl-D-erythritol 2-phosphate = 2-C-methyl-D-erythritol 2,4-cyclic diphosphate + CMP. It participates in isoprenoid biosynthesis; isopentenyl diphosphate biosynthesis via DXP pathway; isopentenyl diphosphate from 1-deoxy-D-xylulose 5-phosphate: step 4/6. In terms of biological role, involved in the biosynthesis of isopentenyl diphosphate (IPP) and dimethylallyl diphosphate (DMAPP), two major building blocks of isoprenoid compounds. Catalyzes the conversion of 4-diphosphocytidyl-2-C-methyl-D-erythritol 2-phosphate (CDP-ME2P) to 2-C-methyl-D-erythritol 2,4-cyclodiphosphate (ME-CPP) with a corresponding release of cytidine 5-monophosphate (CMP). The chain is 2-C-methyl-D-erythritol 2,4-cyclodiphosphate synthase from Thiobacillus denitrificans (strain ATCC 25259 / T1).